The sequence spans 359 residues: Transcription factor bHLH130 (359 aa).

Serine 60 is subject to Phosphoserine. The interval glutamate 161–serine 186 is disordered. The span at proline 167–proline 184 shows a compositional bias: polar residues. Residues cysteine 285–leucine 335 form the bHLH domain.

In terms of assembly, homodimer.

The protein resides in the nucleus. This chain is Transcription factor bHLH130 (BHLH130), found in Arabidopsis thaliana (Mouse-ear cress).